Here is an 88-residue protein sequence, read N- to C-terminus: Large ribosomal subunit protein eL37A (88 aa).

Zn(2+) is bound by residues cysteine 19, cysteine 22, cysteine 34, and cysteine 37. The C4-type zinc finger occupies 19 to 37 (CNRCGRRSFHVQKKTCSSC).

The protein belongs to the eukaryotic ribosomal protein eL37 family. In terms of assembly, component of the large ribosomal subunit (LSU). Mature yeast ribosomes consist of a small (40S) and a large (60S) subunit. The 40S small subunit contains 1 molecule of ribosomal RNA (18S rRNA) and 33 different proteins (encoded by 57 genes). The large 60S subunit contains 3 rRNA molecules (25S, 5.8S and 5S rRNA) and 46 different proteins (encoded by 81 genes). Zn(2+) is required as a cofactor.

It is found in the cytoplasm. Functionally, component of the ribosome, a large ribonucleoprotein complex responsible for the synthesis of proteins in the cell. The small ribosomal subunit (SSU) binds messenger RNAs (mRNAs) and translates the encoded message by selecting cognate aminoacyl-transfer RNA (tRNA) molecules. The large subunit (LSU) contains the ribosomal catalytic site termed the peptidyl transferase center (PTC), which catalyzes the formation of peptide bonds, thereby polymerizing the amino acids delivered by tRNAs into a polypeptide chain. The nascent polypeptides leave the ribosome through a tunnel in the LSU and interact with protein factors that function in enzymatic processing, targeting, and the membrane insertion of nascent chains at the exit of the ribosomal tunnel. This Saccharomyces cerevisiae (strain ATCC 204508 / S288c) (Baker's yeast) protein is Large ribosomal subunit protein eL37A.